The sequence spans 366 residues: Chorismate synthase (366 aa).

NADP(+)-binding residues include arginine 48 and arginine 54. FMN contacts are provided by residues 125–127 (RSS), 238–239 (NA), glycine 278, 293–297 (KPTSS), and arginine 319.

The protein belongs to the chorismate synthase family. As to quaternary structure, homotetramer. Requires FMNH2 as cofactor.

It catalyses the reaction 5-O-(1-carboxyvinyl)-3-phosphoshikimate = chorismate + phosphate. Its pathway is metabolic intermediate biosynthesis; chorismate biosynthesis; chorismate from D-erythrose 4-phosphate and phosphoenolpyruvate: step 7/7. Catalyzes the anti-1,4-elimination of the C-3 phosphate and the C-6 proR hydrogen from 5-enolpyruvylshikimate-3-phosphate (EPSP) to yield chorismate, which is the branch point compound that serves as the starting substrate for the three terminal pathways of aromatic amino acid biosynthesis. This reaction introduces a second double bond into the aromatic ring system. In Paraburkholderia phytofirmans (strain DSM 17436 / LMG 22146 / PsJN) (Burkholderia phytofirmans), this protein is Chorismate synthase.